The sequence spans 659 residues: ATP-binding cassette sub-family D member 3 (659 aa).

The segment at 1–61 (MAAFSKYLTA…GKKERAVVDK (61 aa)) is interaction with PEX19. N-linked (GlcNAc...) asparagine glycosylation is present at Asn12. An N6-acetyllysine modification is found at Lys61. Residues 84 to 104 (GYLVLIAVMLVSRTYCDVWMI) traverse the membrane as a helical segment. An ABC transmembrane type-1 domain is found at 85 to 372 (YLVLIAVMLV…MLLRMSQALG (288 aa)). Asn106 carries an N-linked (GlcNAc...) asparagine glycan. A helical transmembrane segment spans residues 126-146 (LLNFIAAMPLISLVNNFLKYG). Residue Asn206 is glycosylated (N-linked (GlcNAc...) asparagine). A helical transmembrane segment spans residues 224-244 (AIGAQGPASMMAYLVVSGLFL). Lys260 bears the N6-acetyllysine mark. Residues 313–333 (MGFIDSIIAKYLATVVGYLVV) form a helical membrane-spanning segment. At Lys399 the chain carries N6-acetyllysine. In terms of domain architecture, ABC transporter spans 440–659 (IKFDHVPLAT…ITEDTVEFGS (220 aa)). Position 473 to 480 (473 to 480 (GPNGCGKS)) interacts with ATP. An N6-acetyllysine modification is found at Lys533. A Phosphoserine modification is found at Ser659.

Belongs to the ABC transporter superfamily. ABCD family. Peroxisomal fatty acyl CoA transporter (TC 3.A.1.203) subfamily. In terms of assembly, homodimers. Can form heterodimers with ABCD1 and ABCD2. Dimerization is necessary to form an active transporter. Interacts with PEX19; mediates the targeting of ABCD3 to peroxisomes. In terms of processing, ubiquitinated by PEX2 during pexophagy in response to starvation, leading to its degradation.

The protein resides in the peroxisome membrane. The enzyme catalyses a very long-chain fatty acyl-CoA + H2O = a very long-chain fatty acid + CoA + H(+). It catalyses the reaction a very long-chain fatty acid(in) + ATP + H2O = a very long-chain fatty acid(out) + ADP + phosphate + H(+). The catalysed reaction is a long-chain fatty acyl-CoA + H2O = a long-chain fatty acid + CoA + H(+). It carries out the reaction a long-chain fatty acid(in) + ATP + H2O = a long-chain fatty acid(out) + ADP + phosphate + H(+). The enzyme catalyses pristanoyl-CoA + H2O = 2,6,10,14-tetramethylpentadecanoate + CoA + H(+). It catalyses the reaction 2,6,10,14-tetramethylpentadecanoate(in) + ATP + H2O = 2,6,10,14-tetramethylpentadecanoate(out) + ADP + phosphate + H(+). The catalysed reaction is hexadecanedioyl-CoA + H2O = hexadecanedioate + CoA + H(+). It carries out the reaction hexadecanedioate(in) + ATP + H2O = hexadecanedioate(out) + ADP + phosphate + H(+). The enzyme catalyses (5Z,8Z,11Z,14Z,17Z)-eicosapentaenoyl-CoA + H2O = (5Z,8Z,11Z,14Z,17Z)-eicosapentaenoate + CoA + H(+). It catalyses the reaction (5Z,8Z,11Z,14Z,17Z)-eicosapentaenoate(in) + ATP + H2O = (5Z,8Z,11Z,14Z,17Z)-eicosapentaenoate(out) + ADP + phosphate + H(+). The catalysed reaction is (4Z,7Z,10Z,13Z,16Z,19Z)-docosahexaenoyl-CoA + H2O = (4Z,7Z,10Z,13Z,16Z,19Z)-docosahexaenoate + CoA + H(+). It carries out the reaction (4Z,7Z,10Z,13Z,16Z,19Z)-docosahexaenoate(in) + ATP + H2O = (4Z,7Z,10Z,13Z,16Z,19Z)-docosahexaenoate(out) + ADP + phosphate + H(+). Its function is as follows. Broad substrate specificity ATP-dependent transporter of the ATP-binding cassette (ABC) family that catalyzes the transport of long-chain fatty acids (LCFA)-CoA, dicarboxylic acids-CoA, long-branched-chain fatty acids-CoA and bile acids from the cytosol to the peroxisome lumen for beta-oxydation. Has fatty acyl-CoA thioesterase and ATPase activities. Probably hydrolyzes fatty acyl-CoAs into free fatty acids prior to their ATP-dependent transport into peroxisomes. Thus, play a role in regulation of LCFAs and energy metabolism namely, in the degradation and biosynthesis of fatty acids by beta-oxidation. The polypeptide is ATP-binding cassette sub-family D member 3 (Homo sapiens (Human)).